The chain runs to 562 residues: Formate--tetrahydrofolate ligase (562 aa).

Residue 71–78 (TPAGEGKS) coordinates ATP.

This sequence belongs to the formate--tetrahydrofolate ligase family.

The enzyme catalyses (6S)-5,6,7,8-tetrahydrofolate + formate + ATP = (6R)-10-formyltetrahydrofolate + ADP + phosphate. The protein operates within one-carbon metabolism; tetrahydrofolate interconversion. This is Formate--tetrahydrofolate ligase from Bacillus cereus (strain G9842).